A 411-amino-acid chain; its full sequence is Carbohydrate sulfotransferase 1 (411 aa).

A topological domain (cytoplasmic) is located at residue methionine 1. The helical; Signal-anchor for type II membrane protein transmembrane segment at 2-23 (QCSWKAVLLLALASIAIQYTAI) threads the bilayer. The Lumenal portion of the chain corresponds to 24–411 (RTFTAKSFHT…VEERDFRPFL (388 aa)). An N-linked (GlcNAc...) asparagine glycan is attached at asparagine 56. A 3'-phosphoadenylyl sulfate-binding site is contributed by 69 to 75 (TRSGSSF). Residues asparagine 145 and asparagine 189 are each glycosylated (N-linked (GlcNAc...) asparagine). Residue 234-242 (RDPRGILAS) coordinates 3'-phosphoadenylyl sulfate. A glycan (N-linked (GlcNAc...) asparagine) is linked at asparagine 334. The Cell attachment site motif lies at 337–339 (RGD).

It belongs to the sulfotransferase 1 family. Gal/GlcNAc/GalNAc subfamily.

Its subcellular location is the golgi apparatus membrane. The catalysed reaction is 3'-phosphoadenylyl sulfate + keratan = adenosine 3',5'-bisphosphate + keratan 6'-sulfate.. It participates in glycan metabolism. In terms of biological role, sulfotransferase that utilizes 3'-phospho-5'-adenylyl sulfate (PAPS) as sulfonate donor to catalyze the transfer of sulfate to position 6 of internal galactose (Gal) residues of keratan. Cooperates with B4GALT4 and B3GNT7 glycosyltransferases and CHST6 sulfotransferase to construct and elongate disulfated disaccharide unit [-&gt;3(6-sulfoGalbeta)1-&gt;4(6-sulfoGlcNAcbeta)1-&gt;] within keratan sulfate polymer. Has a preference for sulfating keratan sulfate, but it also transfers sulfate to the unsulfated polymer. Involved in biosynthesis of phosphacan, a major keratan sulfate proteoglycan in the developing brain. Involved in biosynthesis of 6-sulfoGalbeta-containing O-linked glycans in high endothelial venules of lymph nodes. May act in a synergistic manner with CHST4 to generate sialyl 6',6-disulfo Lewis X motif, a recognition determinant for immune cell receptors implicated in leukocyte trafficking. Catalyzes sulfation of N-acetyllactosamine (LacNAc) oligosaccharides with highest efficiency for sialylated LacNAc structures. The polypeptide is Carbohydrate sulfotransferase 1 (Chst1) (Rattus norvegicus (Rat)).